A 35-amino-acid chain; its full sequence is Kappa-theraphotoxin-Gr1b (35 aa).

3 disulfides stabilise this stretch: Cys-2–Cys-16, Cys-9–Cys-21, and Cys-15–Cys-28. The involved in active face stretch occupies residues 4-6; the sequence is YLF.

Belongs to the neurotoxin 10 (Hwtx-1) family. 09 (HaTx) subfamily. In terms of tissue distribution, expressed by the venom gland.

It localises to the secreted. Its function is as follows. Inhibitor of voltage-gated potassium channels. Inhibits Kv2.1/KCNB1 channels, by shifting activation of the channel to more depolarized voltages. The toxin binding sites may be situated on the S3-S4 extracellular linker of the channel. One, two, three or four toxin molecules may bind the Kv2.1/KCNB1 channel. May need to partition into the membrane in order to bind to the channel. Antibacterial activity is not observed. In Grammostola rosea (Chilean rose tarantula), this protein is Kappa-theraphotoxin-Gr1b.